A 124-amino-acid chain; its full sequence is Fluoride-specific ion channel FluC (124 aa).

Transmembrane regions (helical) follow at residues F6 to V26, F34 to A54, A69 to L89, and F101 to L121. Na(+)-binding residues include G76 and T79.

The protein belongs to the fluoride channel Fluc/FEX (TC 1.A.43) family.

Its subcellular location is the cell inner membrane. It carries out the reaction fluoride(in) = fluoride(out). Its activity is regulated as follows. Na(+) is not transported, but it plays an essential structural role and its presence is essential for fluoride channel function. Fluoride-specific ion channel. Important for reducing fluoride concentration in the cell, thus reducing its toxicity. This Stutzerimonas stutzeri (strain A1501) (Pseudomonas stutzeri) protein is Fluoride-specific ion channel FluC.